The chain runs to 370 residues: GTPase Obg (370 aa).

The 159-residue stretch at 1 to 159 folds into the Obg domain; it reads MKFIDEARIE…RMLRLELKVL (159 aa). The tract at residues 127 to 146 is disordered; the sequence is NLHFKSSTNRAPRQKTDGKP. The region spanning 160–334 is the OBG-type G domain; sequence ADVGLLGMPN…LCYAIYDYLA (175 aa). Residues 166–173, 191–195, 213–216, 284–287, and 315–317 contribute to the GTP site; these read GMPNAGKS, FTTLA, DIPG, NKLD, and SAL. Residues Ser-173 and Thr-193 each coordinate Mg(2+). The segment at 350 to 370 is disordered; the sequence is ADVRFRDAPPSDGGATSGGDA.

This sequence belongs to the TRAFAC class OBG-HflX-like GTPase superfamily. OBG GTPase family. Monomer. Requires Mg(2+) as cofactor.

The protein resides in the cytoplasm. Its function is as follows. An essential GTPase which binds GTP, GDP and possibly (p)ppGpp with moderate affinity, with high nucleotide exchange rates and a fairly low GTP hydrolysis rate. Plays a role in control of the cell cycle, stress response, ribosome biogenesis and in those bacteria that undergo differentiation, in morphogenesis control. This is GTPase Obg from Burkholderia vietnamiensis (strain G4 / LMG 22486) (Burkholderia cepacia (strain R1808)).